We begin with the raw amino-acid sequence, 129 residues long: Small ribosomal subunit protein uS11 (129 aa).

This sequence belongs to the universal ribosomal protein uS11 family. As to quaternary structure, part of the 30S ribosomal subunit. Interacts with proteins S7 and S18. Binds to IF-3.

Functionally, located on the platform of the 30S subunit, it bridges several disparate RNA helices of the 16S rRNA. Forms part of the Shine-Dalgarno cleft in the 70S ribosome. The protein is Small ribosomal subunit protein uS11 of Phenylobacterium zucineum (strain HLK1).